Consider the following 436-residue polypeptide: GTPase Der (436 aa).

EngA-type G domains lie at 3-167 (NIVA…PIKP) and 177-352 (PRFA…ENRQ). Residues 9–16 (GRPNVGKS), 56–60 (DTGGY), 119–122 (NKVD), 183–190 (GRPNAGKS), 230–234 (DTAGI), and 295–298 (NKWD) each bind GTP. In terms of domain architecture, KH-like spans 353-436 (QRISTSKFNE…VPIDIYIREK (84 aa)).

The protein belongs to the TRAFAC class TrmE-Era-EngA-EngB-Septin-like GTPase superfamily. EngA (Der) GTPase family. In terms of assembly, associates with the 50S ribosomal subunit.

In terms of biological role, GTPase that plays an essential role in the late steps of ribosome biogenesis. The protein is GTPase Der of Flavobacterium psychrophilum (strain ATCC 49511 / DSM 21280 / CIP 103535 / JIP02/86).